The following is a 177-amino-acid chain: Large ribosomal subunit protein uL6 (177 aa).

It belongs to the universal ribosomal protein uL6 family. Part of the 50S ribosomal subunit.

Its function is as follows. This protein binds to the 23S rRNA, and is important in its secondary structure. It is located near the subunit interface in the base of the L7/L12 stalk, and near the tRNA binding site of the peptidyltransferase center. The sequence is that of Large ribosomal subunit protein uL6 from Neisseria meningitidis serogroup C (strain 053442).